We begin with the raw amino-acid sequence, 282 residues long: Trihydroxynaphthalene reductase PfmaI (282 aa).

Positions 41, 114, and 147 each coordinate NADP(+). Active-site proton donor residues include Ser-164 and Tyr-178. NADP(+) contacts are provided by Tyr-178, Lys-182, Ile-211, and Thr-213. Lys-182 serves as the catalytic Lowers pKa of active site Tyr.

This sequence belongs to the short-chain dehydrogenases/reductases (SDR) family.

It participates in pigment biosynthesis; melanin biosynthesis. Functionally, trihydroxynaphthalene reductase involved the biosynthesis of dihydroxynaphthalene (DHN)-melanin, a bluish-green pigment forming a dark layer in the conidial wall that protects the conidia from UV radiations. The first step of the pathway is the production of the pentaketide 1,3,6,8-tetrahydroxynaphthalene (1,3,6,8-THN or T4HN) by the polyketide synthase PfmaE though condensation of acetyl-CoA with malonyl-CoA. T4HN is not stable and easily oxidizes into the stable form flaviolin. T4HN is also substrate of the hydroxynaphthalene reductase PfmaG to yield scytalone. The scytalone dehydratase PfmaJ then reduces scytalone to 1,3,8-THN. 1,3,8-THN is then substrate of the hydroxynaphthalene reductase PfmaI to yield vermelone. Vermelone is further converted by the multicopper oxidase PfmaD to 1,8-DHN. Finally the laccase PFICI_06862 transforms 1,8-DHN to DHN-melanin. The roles of the 5-oxoprolinase PfmaA and the proline iminopeptidase PfmaB within the cluster have not been elucidated yet. The chain is Trihydroxynaphthalene reductase PfmaI from Pestalotiopsis fici (strain W106-1 / CGMCC3.15140).